The sequence spans 388 residues: Flap endonuclease 1 (388 aa).

The tract at residues 1–104 (MGILGLSKLI…GELAKRAERR (104 aa)) is N-domain. A Mg(2+)-binding site is contributed by Asp34. The DNA site is built by Arg47 and Arg70. Positions 86, 158, 160, 179, and 181 each coordinate Mg(2+). The segment at 122-253 (EIEKFNRRLV…KRAIELIKTY (132 aa)) is I-domain. Glu158 contacts DNA. Positions 231 and 233 each coordinate DNA. Residue Asp233 coordinates Mg(2+). Residues 336–344 (TQVRLDSFF) form an interaction with PCNA region. Residues 351-388 (PNATAAAKRKAEEIKKSANNKKAKTSGGSGAARGRRPK) form a disordered region.

Belongs to the XPG/RAD2 endonuclease family. FEN1 subfamily. As to quaternary structure, interacts with PCNA. Three molecules of FEN1 bind to one PCNA trimer with each molecule binding to one PCNA monomer. PCNA stimulates the nuclease activity without altering cleavage specificity. It depends on Mg(2+) as a cofactor. In terms of processing, phosphorylated. Phosphorylation upon DNA damage induces relocalization to the nuclear plasma.

Its subcellular location is the nucleus. It localises to the nucleolus. The protein localises to the nucleoplasm. The protein resides in the mitochondrion. Functionally, structure-specific nuclease with 5'-flap endonuclease and 5'-3' exonuclease activities involved in DNA replication and repair. During DNA replication, cleaves the 5'-overhanging flap structure that is generated by displacement synthesis when DNA polymerase encounters the 5'-end of a downstream Okazaki fragment. It enters the flap from the 5'-end and then tracks to cleave the flap base, leaving a nick for ligation. Also involved in the long patch base excision repair (LP-BER) pathway, by cleaving within the apurinic/apyrimidinic (AP) site-terminated flap. Acts as a genome stabilization factor that prevents flaps from equilibrating into structures that lead to duplications and deletions. Also possesses 5'-3' exonuclease activity on nicked or gapped double-stranded DNA, and exhibits RNase H activity. Also involved in replication and repair of rDNA and in repairing mitochondrial DNA. This Drosophila mojavensis (Fruit fly) protein is Flap endonuclease 1.